The following is a 574-amino-acid chain: 5'-nucleotidase (574 aa).

An N-terminal signal peptide occupies residues 1 to 26 (MNPGAARTPALRILALGALLWPAARP). Zn(2+)-binding residues include D36 and H38. C51 and C57 are oxidised to a cystine. Residue N53 is glycosylated (N-linked (GlcNAc...) asparagine). Zn(2+) is bound by residues D85, N117, H220, and H243. 2 N-linked (GlcNAc...) asparagine glycosylation sites follow: N311 and N333. 2 disulfide bridges follow: C353–C358 and C365–C387. R354 contributes to the AMP binding site. Residue R354 participates in IMP binding. Residues N390 and R395 each coordinate AMP. Positions 390 and 395 each coordinate IMP. N403 carries an N-linked (GlcNAc...) asparagine glycan. Residue F417 coordinates AMP. An IMP-binding site is contributed by F417. A disulfide bond links C476 and C479. AMP-binding residues include F500 and D506. Positions 500 and 506 each coordinate IMP. S549 carries the GPI-anchor amidated serine lipid modification. A propeptide spans 550 to 574 (AGSHCCGSFSLIFLSVLAVIIILYQ) (removed in mature form).

Belongs to the 5'-nucleotidase family. As to quaternary structure, homodimer. Zn(2+) serves as cofactor.

The protein resides in the cell membrane. The enzyme catalyses a ribonucleoside 5'-phosphate + H2O = a ribonucleoside + phosphate. It carries out the reaction a 2'-deoxyribonucleoside 5'-phosphate + H2O = a 2'-deoxyribonucleoside + phosphate. It catalyses the reaction dTMP + H2O = thymidine + phosphate. The catalysed reaction is CMP + H2O = cytidine + phosphate. The enzyme catalyses IMP + H2O = inosine + phosphate. It carries out the reaction AMP + H2O = adenosine + phosphate. It catalyses the reaction GMP + H2O = guanosine + phosphate. The catalysed reaction is UMP + H2O = uridine + phosphate. The enzyme catalyses dAMP + H2O = 2'-deoxyadenosine + phosphate. It carries out the reaction dCMP + H2O = 2'-deoxycytidine + phosphate. Functionally, catalyzes the hydrolysis of nucleotide monophosphates, releasing inorganic phosphate and the corresponding nucleoside, with AMP being the preferred substrate. Shows a preference for ribonucleotide monophosphates over their equivalent deoxyribose forms. Other substrates include IMP, UMP, GMP, CMP, dAMP, dCMP, dTMP, NAD and NMN. This is 5'-nucleotidase (NT5E) from Bos taurus (Bovine).